A 957-amino-acid chain; its full sequence is Glycine dehydrogenase (decarboxylating) (957 aa).

Lys-708 is subject to N6-(pyridoxal phosphate)lysine.

It belongs to the GcvP family. As to quaternary structure, the glycine cleavage system is composed of four proteins: P, T, L and H. Pyridoxal 5'-phosphate serves as cofactor.

The enzyme catalyses N(6)-[(R)-lipoyl]-L-lysyl-[glycine-cleavage complex H protein] + glycine + H(+) = N(6)-[(R)-S(8)-aminomethyldihydrolipoyl]-L-lysyl-[glycine-cleavage complex H protein] + CO2. The glycine cleavage system catalyzes the degradation of glycine. The P protein binds the alpha-amino group of glycine through its pyridoxal phosphate cofactor; CO(2) is released and the remaining methylamine moiety is then transferred to the lipoamide cofactor of the H protein. This Enterobacter sp. (strain 638) protein is Glycine dehydrogenase (decarboxylating).